A 206-amino-acid chain; its full sequence is High frequency lysogenization protein HflD homolog (206 aa).

This sequence belongs to the HflD family.

The protein resides in the cytoplasm. It is found in the cell inner membrane. This chain is High frequency lysogenization protein HflD homolog, found in Pseudomonas syringae pv. syringae (strain B728a).